A 421-amino-acid chain; its full sequence is Serine hydroxymethyltransferase (421 aa).

(6S)-5,6,7,8-tetrahydrofolate-binding positions include Leu-121 and 125-127 (GHL). Lys-229 carries the N6-(pyridoxal phosphate)lysine modification.

The protein belongs to the SHMT family. Homodimer. Pyridoxal 5'-phosphate serves as cofactor.

The protein resides in the cytoplasm. It carries out the reaction (6R)-5,10-methylene-5,6,7,8-tetrahydrofolate + glycine + H2O = (6S)-5,6,7,8-tetrahydrofolate + L-serine. The protein operates within one-carbon metabolism; tetrahydrofolate interconversion. Its pathway is amino-acid biosynthesis; glycine biosynthesis; glycine from L-serine: step 1/1. Catalyzes the reversible interconversion of serine and glycine with tetrahydrofolate (THF) serving as the one-carbon carrier. This reaction serves as the major source of one-carbon groups required for the biosynthesis of purines, thymidylate, methionine, and other important biomolecules. Also exhibits THF-independent aldolase activity toward beta-hydroxyamino acids, producing glycine and aldehydes, via a retro-aldol mechanism. The protein is Serine hydroxymethyltransferase of Haemophilus influenzae (strain 86-028NP).